We begin with the raw amino-acid sequence, 376 residues long: Sterol 24-C-methyltransferase (376 aa).

This sequence belongs to the class I-like SAM-binding methyltransferase superfamily. Erg6/SMT family.

It carries out the reaction zymosterol + S-adenosyl-L-methionine = fecosterol + S-adenosyl-L-homocysteine + H(+). It functions in the pathway steroid metabolism; ergosterol biosynthesis; ergosterol from zymosterol: step 1/5. Substrate analogs 25-azalanosterol and 24(R,S),25-epiminolanosterol act as inhibitors. Sterol 24-C-methyltransferase; part of the third module of ergosterol biosynthesis pathway that includes the late steps of the pathway. ERG6 catalyzes the methyl transfer from S-adenosyl-methionine to the C-24 of zymosterol to form fecosterol. The third module or late pathway involves the ergosterol synthesis itself through consecutive reactions that mainly occur in the endoplasmic reticulum (ER) membrane. Firstly, the squalene synthase ERG9 catalyzes the condensation of 2 farnesyl pyrophosphate moieties to form squalene, which is the precursor of all steroids. Squalene synthase is crucial for balancing the incorporation of farnesyl diphosphate (FPP) into sterol and nonsterol isoprene synthesis. Secondly, the squalene epoxidase ERG1 catalyzes the stereospecific oxidation of squalene to (S)-2,3-epoxysqualene, which is considered to be a rate-limiting enzyme in steroid biosynthesis. Then, the lanosterol synthase ERG7 catalyzes the cyclization of (S)-2,3 oxidosqualene to lanosterol, a reaction that forms the sterol core. In the next steps, lanosterol is transformed to zymosterol through a complex process involving various demethylation, reduction and desaturation reactions. The lanosterol 14-alpha-demethylase ERG11 (also known as CYP51) catalyzes C14-demethylation of lanosterol to produce 4,4'-dimethyl cholesta-8,14,24-triene-3-beta-ol, which is critical for ergosterol biosynthesis. The C-14 reductase ERG24 reduces the C14=C15 double bond of 4,4-dimethyl-cholesta-8,14,24-trienol to produce 4,4-dimethyl-cholesta-8,24-dienol. 4,4-dimethyl-cholesta-8,24-dienol is substrate of the C-4 demethylation complex ERG25-ERG26-ERG27 in which ERG25 catalyzes the three-step monooxygenation required for the demethylation of 4,4-dimethyl and 4alpha-methylsterols, ERG26 catalyzes the oxidative decarboxylation that results in a reduction of the 3-beta-hydroxy group at the C-3 carbon to an oxo group, and ERG27 is responsible for the reduction of the keto group on the C-3. ERG28 has a role as a scaffold to help anchor ERG25, ERG26 and ERG27 to the endoplasmic reticulum and ERG29 regulates the activity of the iron-containing C4-methylsterol oxidase ERG25. Then, the sterol 24-C-methyltransferase ERG6 catalyzes the methyl transfer from S-adenosyl-methionine to the C-24 of zymosterol to form fecosterol. The C-8 sterol isomerase ERG2 catalyzes the reaction which results in unsaturation at C-7 in the B ring of sterols and thus converts fecosterol to episterol. The sterol-C5-desaturase ERG3 then catalyzes the introduction of a C-5 double bond in the B ring to produce 5-dehydroepisterol. The C-22 sterol desaturase ERG5 further converts 5-dehydroepisterol into ergosta-5,7,22,24(28)-tetraen-3beta-ol by forming the C-22(23) double bond in the sterol side chain. Finally, ergosta-5,7,22,24(28)-tetraen-3beta-ol is substrate of the C-24(28) sterol reductase ERG4 to produce ergosterol. The chain is Sterol 24-C-methyltransferase from Candida albicans (strain SC5314 / ATCC MYA-2876) (Yeast).